The chain runs to 350 residues: Glyoxylate reductase 1 (350 aa).

Residue Thr31 is modified to Phosphothreonine. Residues 173–174 (RI), 252–254 (TAR), and Asp278 contribute to the NAD(+) site. Arg254 is an active-site residue. The active site involves Glu283. His301 functions as the Proton donor in the catalytic mechanism. 301-304 (HMGT) serves as a coordination point for NAD(+).

Belongs to the D-isomer specific 2-hydroxyacid dehydrogenase family.

It is found in the cytoplasm. Its subcellular location is the nucleus. The protein resides in the mitochondrion. It carries out the reaction glycolate + NAD(+) = glyoxylate + NADH + H(+). The enzyme catalyses glycolate + NADP(+) = glyoxylate + NADPH + H(+). The catalysed reaction is (R)-glycerate + NAD(+) = 3-hydroxypyruvate + NADH + H(+). It catalyses the reaction (R)-glycerate + NADP(+) = 3-hydroxypyruvate + NADPH + H(+). In terms of biological role, glyoxylate reductase that reversibly reduces glyoxylate to glycolate, or alternatively hydroxypyruvate to D-glycerate, using either NADPH or NADH as a cosubstrate. Does not act as a hydroxyisocaproate dehydrogenase even though it also has minor activity on alpha-ketoisocaproate. This is Glyoxylate reductase 1 from Saccharomyces cerevisiae (strain ATCC 204508 / S288c) (Baker's yeast).